The sequence spans 88 residues: FAD assembly factor SdhE (88 aa).

Belongs to the SdhE FAD assembly factor family. As to quaternary structure, monomer. Makes weak or transient interactions with SdhA. Interacts with YgfX. Interacts with FrdA.

The protein localises to the cytoplasm. The protein operates within antibiotic biosynthesis; prodigiosin biosynthesis. In terms of biological role, an FAD assembly protein, which accelerates covalent attachment of the cofactor into other proteins. Plays an essential role in the assembly of succinate dehydrogenase (SDH, respiratory complex II), an enzyme complex that is a component of both the tricarboxylic acid cycle and the electron transport chain, and which couples the oxidation of succinate to fumarate with the reduction of ubiquinone (coenzyme Q) to ubiquinol. Required for flavinylation (covalent attachment of FAD) of the flavoprotein subunit SdhA of SDH. Required for flavinylation of the flavoprotein subunit FrdA of fumarate reductase (FRD). Flavinylation of SDH and FRD occurs in a similar but not identical manner, as site-specific mutations display subtle differences between them. Flavinylates SdhA in vivo in the absence of the other SDH subunits; SdhE mutants that do not flavinylate also interfere with wild-type activity in a possible dominant-negative fashion. Weakly binds to FAD and facilitates its binding to SdhA. Required for production of prodigiosin antibiotic (Pig); overproduction of SdhE in a deletion mutant leads to decreased synthesis of Pig compared to wild-type. Capable of flavinylating A.pasteurianus SdhA when the SDH operon and this gene are expressed in G.oxydans; flavinylation of SdhA is detected only in the presence of sdhE. The protein is FAD assembly factor SdhE of Serratia sp. (strain ATCC 39006) (Prodigiosinella confusarubida).